Here is a 203-residue protein sequence, read N- to C-terminus: Large ribosomal subunit protein bL25 (203 aa).

The protein belongs to the bacterial ribosomal protein bL25 family. CTC subfamily. In terms of assembly, part of the 50S ribosomal subunit; part of the 5S rRNA/L5/L18/L25 subcomplex. Contacts the 5S rRNA. Binds to the 5S rRNA independently of L5 and L18.

In terms of biological role, this is one of the proteins that binds to the 5S RNA in the ribosome where it forms part of the central protuberance. This chain is Large ribosomal subunit protein bL25, found in Chlorobium phaeovibrioides (strain DSM 265 / 1930) (Prosthecochloris vibrioformis (strain DSM 265)).